The primary structure comprises 554 residues: 3-(3-hydroxy-phenyl)propionate/3-hydroxycinnamic acid hydroxylase (554 aa).

FAD-binding positions include 17–46 (QVAI…VVEK) and 285–295 (FRIDRVLLAGD).

This sequence belongs to the PheA/TfdB FAD monooxygenase family. The cofactor is FAD.

The enzyme catalyses 3-(3-hydroxyphenyl)propanoate + NADH + O2 + H(+) = 3-(2,3-dihydroxyphenyl)propanoate + NAD(+) + H2O. The catalysed reaction is (2E)-3-(3-hydroxyphenyl)prop-2-enoate + NADH + O2 + H(+) = (2E)-3-(2,3-dihydroxyphenyl)prop-2-enoate + NAD(+) + H2O. The protein operates within aromatic compound metabolism; 3-phenylpropanoate degradation. Its function is as follows. Catalyzes the insertion of one atom of molecular oxygen into position 2 of the phenyl ring of 3-(3-hydroxyphenyl)propionate (3-HPP) and hydroxycinnamic acid (3HCI). This chain is 3-(3-hydroxy-phenyl)propionate/3-hydroxycinnamic acid hydroxylase, found in Escherichia coli O8 (strain IAI1).